A 251-amino-acid polypeptide reads, in one-letter code: tRNA (guanine-N(7)-)-methyltransferase (251 aa).

S-adenosyl-L-methionine-binding residues include Glu-80, Glu-105, Asp-132, and Asp-155. The active site involves Asp-155. Substrate contacts are provided by residues Lys-159, Asp-191, and 228 to 231; that span reads TKFE.

The protein belongs to the class I-like SAM-binding methyltransferase superfamily. TrmB family.

It carries out the reaction guanosine(46) in tRNA + S-adenosyl-L-methionine = N(7)-methylguanosine(46) in tRNA + S-adenosyl-L-homocysteine. Its pathway is tRNA modification; N(7)-methylguanine-tRNA biosynthesis. Catalyzes the formation of N(7)-methylguanine at position 46 (m7G46) in tRNA. The protein is tRNA (guanine-N(7)-)-methyltransferase of Histophilus somni (strain 129Pt) (Haemophilus somnus).